The chain runs to 244 residues: Probable transcriptional regulatory protein DR_2548 (244 aa).

A disordered region spans residues 1–23; sequence MAGHSKWAQIKRKKGANDKKRSA.

The protein belongs to the TACO1 family.

The protein localises to the cytoplasm. In Deinococcus radiodurans (strain ATCC 13939 / DSM 20539 / JCM 16871 / CCUG 27074 / LMG 4051 / NBRC 15346 / NCIMB 9279 / VKM B-1422 / R1), this protein is Probable transcriptional regulatory protein DR_2548.